Consider the following 410-residue polypeptide: Elongation factor Tu (410 aa).

The region spanning 10-214 (KPHVNIGTIG…EVDAYIPTPE (205 aa)) is the tr-type G domain. Residues 19–26 (GHVDHGKT) form a G1 region. 19-26 (GHVDHGKT) provides a ligand contact to GTP. Mg(2+) is bound at residue threonine 26. The interval 60-64 (GITIN) is G2. A G3 region spans residues 81–84 (DCPG). GTP-binding positions include 81–85 (DCPGH) and 136–139 (NKAD). The G4 stretch occupies residues 136-139 (NKAD). Positions 174–176 (SAL) are G5.

The protein belongs to the TRAFAC class translation factor GTPase superfamily. Classic translation factor GTPase family. EF-Tu/EF-1A subfamily. Monomer.

It localises to the cytoplasm. It carries out the reaction GTP + H2O = GDP + phosphate + H(+). Its function is as follows. GTP hydrolase that promotes the GTP-dependent binding of aminoacyl-tRNA to the A-site of ribosomes during protein biosynthesis. In Arthrospira platensis (Spirulina platensis), this protein is Elongation factor Tu.